The following is a 198-amino-acid chain: MLCGIDEAGRGPLAGPVTAAAVILPSSFDFSILKDSKKLTEKKREEVRKTIYADPNVIWAIGWASNYEIDEINILQATFLAMERAYEGLYLKLQEFCKLNNDKFIEPDIIVDGNFIPNIKNCSSIKALVKADDSVYEVMAASILAKTARDRMMIRYSWIYPEYGYEKHKGYGTKKHIEAIRFNGYSPIQRRSFFVKNL.

The region spanning Met-1 to Leu-198 is the RNase H type-2 domain. A divalent metal cation-binding residues include Asp-6, Glu-7, and Asp-112.

It belongs to the RNase HII family. It depends on Mn(2+) as a cofactor. The cofactor is Mg(2+).

Its subcellular location is the cytoplasm. The enzyme catalyses Endonucleolytic cleavage to 5'-phosphomonoester.. Functionally, endonuclease that specifically degrades the RNA of RNA-DNA hybrids. The sequence is that of Ribonuclease HII from Treponema denticola (strain ATCC 35405 / DSM 14222 / CIP 103919 / JCM 8153 / KCTC 15104).